Here is a 203-residue protein sequence, read N- to C-terminus: 3-isopropylmalate dehydratase small subunit (203 aa).

Belongs to the LeuD family. LeuD type 1 subfamily. As to quaternary structure, heterodimer of LeuC and LeuD.

It carries out the reaction (2R,3S)-3-isopropylmalate = (2S)-2-isopropylmalate. It participates in amino-acid biosynthesis; L-leucine biosynthesis; L-leucine from 3-methyl-2-oxobutanoate: step 2/4. Catalyzes the isomerization between 2-isopropylmalate and 3-isopropylmalate, via the formation of 2-isopropylmaleate. The chain is 3-isopropylmalate dehydratase small subunit from Symbiobacterium thermophilum (strain DSM 24528 / JCM 14929 / IAM 14863 / T).